We begin with the raw amino-acid sequence, 59 residues long: Photosystem II reaction center protein K (59 aa).

Positions 1–22 are excised as a propeptide; it reads MLNIFSLICLNSALYSSSFFFG. A helical transmembrane segment spans residues 30 to 50; it reads FLSPIVDFMPVIPLFFFLLAF.

As to quaternary structure, PSII is composed of 1 copy each of membrane proteins PsbA, PsbB, PsbC, PsbD, PsbE, PsbF, PsbH, PsbI, PsbJ, PsbK, PsbL, PsbM, PsbT, PsbX, PsbY, PsbZ, Psb30/Ycf12, at least 3 peripheral proteins of the oxygen-evolving complex and a large number of cofactors. It forms dimeric complexes. This protein, PsbL and plastoquinone-9 are found in PSII dimers but not seen in PSII monomers.

It is found in the plastid. The protein localises to the chloroplast thylakoid membrane. Its function is as follows. One of the components of the core complex of photosystem II (PSII). PSII is a light-driven water:plastoquinone oxidoreductase that uses light energy to abstract electrons from H(2)O, generating O(2) and a proton gradient subsequently used for ATP formation. It consists of a core antenna complex that captures photons, and an electron transfer chain that converts photonic excitation into a charge separation. May be involved in PSII dimerization. One of the components of the core complex of photosystem II (PSII). PSII is a light-driven water:plastoquinone oxidoreductase that uses light energy to abstract electrons from H(2)O, generating O(2) and a proton gradient subsequently used for ATP formation. It consists of a core antenna complex that captures photons, and an electron transfer chain that converts photonic excitation into a charge separation. The chain is Photosystem II reaction center protein K from Spinacia oleracea (Spinach).